The following is a 459-amino-acid chain: Elongation factor 1-alpha 1 (459 aa).

Residues 5 to 242 (KTHINIVVIG…DCIIPPQRPT (238 aa)) form the tr-type G domain. Residues 14 to 21 (GHVDSGKS) form a G1 region. A G2 region spans residues 70–74 (GITID). The segment at 91–94 (DAPG) is G3. A G4 region spans residues 153-156 (NKMD). The G5 stretch occupies residues 194 to 196 (SGF). 5-glutamyl glycerylphosphorylethanolamine occurs at positions 301 and 374.

It belongs to the TRAFAC class translation factor GTPase superfamily. Classic translation factor GTPase family. EF-Tu/EF-1A subfamily.

Its subcellular location is the cytoplasm. This protein promotes the GTP-dependent binding of aminoacyl-tRNA to the A-site of ribosomes during protein biosynthesis. In Oscheius tipulae, this protein is Elongation factor 1-alpha 1 (eft-1).